The following is a 669-amino-acid chain: DNA ligase (669 aa).

Residues 33–37 (DLTYD), 82–83 (SL), and Glu115 contribute to the NAD(+) site. Residue Lys117 is the N6-AMP-lysine intermediate of the active site. Arg138, Glu172, Lys286, and Lys310 together coordinate NAD(+). Zn(2+) is bound by residues Cys401, Cys404, Cys417, and Cys422.

It belongs to the NAD-dependent DNA ligase family. LigA subfamily. Mg(2+) is required as a cofactor. Mn(2+) serves as cofactor.

It carries out the reaction NAD(+) + (deoxyribonucleotide)n-3'-hydroxyl + 5'-phospho-(deoxyribonucleotide)m = (deoxyribonucleotide)n+m + AMP + beta-nicotinamide D-nucleotide.. Its function is as follows. DNA ligase that catalyzes the formation of phosphodiester linkages between 5'-phosphoryl and 3'-hydroxyl groups in double-stranded DNA using NAD as a coenzyme and as the energy source for the reaction. It is essential for DNA replication and repair of damaged DNA. The polypeptide is DNA ligase (Borrelia hermsii (strain HS1 / DAH)).